The chain runs to 328 residues: Phosphate acyltransferase (328 aa).

Belongs to the PlsX family. In terms of assembly, homodimer. Probably interacts with PlsY.

It is found in the cytoplasm. The catalysed reaction is a fatty acyl-[ACP] + phosphate = an acyl phosphate + holo-[ACP]. It functions in the pathway lipid metabolism; phospholipid metabolism. Its function is as follows. Catalyzes the reversible formation of acyl-phosphate (acyl-PO(4)) from acyl-[acyl-carrier-protein] (acyl-ACP). This enzyme utilizes acyl-ACP as fatty acyl donor, but not acyl-CoA. In Campylobacter jejuni subsp. jejuni serotype O:2 (strain ATCC 700819 / NCTC 11168), this protein is Phosphate acyltransferase.